A 354-amino-acid polypeptide reads, in one-letter code: Mycothiol acetyltransferase (354 aa).

Residues M1–T18 are compositionally biased toward polar residues. Residues M1–Y21 are disordered. 2 N-acetyltransferase domains span residues Y21 to E176 and L191 to A354. Position 52 (E52) interacts with 1D-myo-inositol 2-(L-cysteinylamino)-2-deoxy-alpha-D-glucopyranoside. Residue A101–V103 participates in acetyl-CoA binding. Positions 217, 259, and 274 each coordinate 1D-myo-inositol 2-(L-cysteinylamino)-2-deoxy-alpha-D-glucopyranoside. Acetyl-CoA contacts are provided by residues V278–V280 and Q285–R291. Y318 contributes to the 1D-myo-inositol 2-(L-cysteinylamino)-2-deoxy-alpha-D-glucopyranoside binding site.

The protein belongs to the acetyltransferase family. MshD subfamily. As to quaternary structure, monomer.

It catalyses the reaction 1D-myo-inositol 2-(L-cysteinylamino)-2-deoxy-alpha-D-glucopyranoside + acetyl-CoA = mycothiol + CoA + H(+). Its function is as follows. Catalyzes the transfer of acetyl from acetyl-CoA to desacetylmycothiol (Cys-GlcN-Ins) to form mycothiol. This is Mycothiol acetyltransferase from Rothia mucilaginosa (strain DY-18) (Stomatococcus mucilaginosus).